The chain runs to 178 residues: CDP-diacylglycerol--glycerol-3-phosphate 3-phosphatidyltransferase (178 aa).

The next 4 helical transmembrane spans lie at 5-25, 32-52, 61-81, and 145-165; these read PNYL…LFYI, KLGA…GYIA, FGKM…TIML, and IIYL…LTII.

Belongs to the CDP-alcohol phosphatidyltransferase class-I family.

The protein resides in the cell membrane. The catalysed reaction is a CDP-1,2-diacyl-sn-glycerol + sn-glycerol 3-phosphate = a 1,2-diacyl-sn-glycero-3-phospho-(1'-sn-glycero-3'-phosphate) + CMP + H(+). Its pathway is phospholipid metabolism; phosphatidylglycerol biosynthesis; phosphatidylglycerol from CDP-diacylglycerol: step 1/2. In terms of biological role, this protein catalyzes the committed step to the synthesis of the acidic phospholipids. This Rickettsia typhi (strain ATCC VR-144 / Wilmington) protein is CDP-diacylglycerol--glycerol-3-phosphate 3-phosphatidyltransferase (pgsA).